The chain runs to 563 residues: ATP-dependent RNA helicase DeaD (563 aa).

The Q motif signature appears at 13–41 (ATFADLQIHPRVLRAIGDVGYESPTAIQA). The Helicase ATP-binding domain maps to 44-215 (IPALMAGSDV…AKYLHDPFEV (172 aa)). Position 57–64 (57–64 (AQTGTGKT)) interacts with ATP. Positions 163–166 (DEAD) match the DEAD box motif. One can recognise a Helicase C-terminal domain in the interval 226–385 (NISQSYIQVA…AQLPTVEDVN (160 aa)). 2 disordered regions span residues 441-470 (LMAP…PDLT) and 543-563 (YRPP…KHVG). Over residues 451 to 461 (RNRDQRRDRPQ) the composition is skewed to basic and acidic residues. Residues 551–563 (RHNGGKPRRKHVG) show a composition bias toward basic residues.

It belongs to the DEAD box helicase family. DeaD/CsdA subfamily.

It localises to the cytoplasm. The enzyme catalyses ATP + H2O = ADP + phosphate + H(+). In terms of biological role, DEAD-box RNA helicase involved in various cellular processes at low temperature, including ribosome biogenesis, mRNA degradation and translation initiation. In Mycobacterium tuberculosis (strain CDC 1551 / Oshkosh), this protein is ATP-dependent RNA helicase DeaD.